We begin with the raw amino-acid sequence, 280 residues long: 2-dehydro-3-deoxyphosphooctonate aldolase 2 (280 aa).

Belongs to the KdsA family.

It is found in the cytoplasm. It catalyses the reaction D-arabinose 5-phosphate + phosphoenolpyruvate + H2O = 3-deoxy-alpha-D-manno-2-octulosonate-8-phosphate + phosphate. It functions in the pathway carbohydrate biosynthesis; 3-deoxy-D-manno-octulosonate biosynthesis; 3-deoxy-D-manno-octulosonate from D-ribulose 5-phosphate: step 2/3. Its pathway is bacterial outer membrane biogenesis; lipopolysaccharide biosynthesis. The protein is 2-dehydro-3-deoxyphosphooctonate aldolase 2 (kdsA2) of Pseudomonas putida (strain ATCC 47054 / DSM 6125 / CFBP 8728 / NCIMB 11950 / KT2440).